The following is a 340-amino-acid chain: Aldo-keto reductase yakc [NADP(+)] (340 aa).

The active-site Proton donor is the Y56. H126 contacts substrate. An NADP(+)-binding site is contributed by 208 to 218 (APLGRGFLTGA).

This sequence belongs to the aldo/keto reductase family. Aldo/keto reductase 2 subfamily. As to quaternary structure, monomer.

The protein is Aldo-keto reductase yakc [NADP(+)] (yakc) of Schizosaccharomyces pombe (strain 972 / ATCC 24843) (Fission yeast).